The primary structure comprises 294 residues: Phosphatidylserine decarboxylase proenzyme (294 aa).

Residues aspartate 100, histidine 157, and serine 261 each act as charge relay system; for autoendoproteolytic cleavage activity in the active site. Serine 261 acts as the Schiff-base intermediate with substrate; via pyruvic acid; for decarboxylase activity in catalysis. Serine 261 is subject to Pyruvic acid (Ser); by autocatalysis.

The protein belongs to the phosphatidylserine decarboxylase family. PSD-B subfamily. Prokaryotic type I sub-subfamily. In terms of assembly, heterodimer of a large membrane-associated beta subunit and a small pyruvoyl-containing alpha subunit. It depends on pyruvate as a cofactor. In terms of processing, is synthesized initially as an inactive proenzyme. Formation of the active enzyme involves a self-maturation process in which the active site pyruvoyl group is generated from an internal serine residue via an autocatalytic post-translational modification. Two non-identical subunits are generated from the proenzyme in this reaction, and the pyruvate is formed at the N-terminus of the alpha chain, which is derived from the carboxyl end of the proenzyme. The autoendoproteolytic cleavage occurs by a canonical serine protease mechanism, in which the side chain hydroxyl group of the serine supplies its oxygen atom to form the C-terminus of the beta chain, while the remainder of the serine residue undergoes an oxidative deamination to produce ammonia and the pyruvoyl prosthetic group on the alpha chain. During this reaction, the Ser that is part of the protease active site of the proenzyme becomes the pyruvoyl prosthetic group, which constitutes an essential element of the active site of the mature decarboxylase.

Its subcellular location is the cell membrane. The catalysed reaction is a 1,2-diacyl-sn-glycero-3-phospho-L-serine + H(+) = a 1,2-diacyl-sn-glycero-3-phosphoethanolamine + CO2. Its pathway is phospholipid metabolism; phosphatidylethanolamine biosynthesis; phosphatidylethanolamine from CDP-diacylglycerol: step 2/2. Functionally, catalyzes the formation of phosphatidylethanolamine (PtdEtn) from phosphatidylserine (PtdSer). This Histophilus somni (strain 129Pt) (Haemophilus somnus) protein is Phosphatidylserine decarboxylase proenzyme.